A 430-amino-acid polypeptide reads, in one-letter code: MSLMTKLGLRTLVASCLIAVGGAANAQLNVLVTGVGSTQFPIATANFANEANSPQQVSTIVRQDLQRSGKFTNIDAGATPVSETDSVDLGSWKAKGANAFVSGSVNRLPNGQYEVRFKLYDTVKGESLGGLVLVSPESGLRMSAHKVADYIYAKLMGGRGVFATRLSYVIKTGGRYQLQISDSDGQDAHIALSSPEPIISPAWSPDGTKVAYVSFEKKKPIVYIHDLPTGRRIVVSDQKGNNSAPAWSPDGRTLAVALSRTGNTQIFAVNADGSGLRRLTQGSSIDTEPCFSPDGQSIYFTSDRGGQPQIYKMSAQGENAGAAQRVTFTGSYNTSPRVSPDGKQLAYISRVGGGFKLYIQDLQGNTATGLTDTTHDESPSFAANGQYILYATQVNGRGVLAAVSTDGRTRQVLSVQGGSVREPSWGPFMQ.

The N-terminal stretch at 1 to 26 (MSLMTKLGLRTLVASCLIAVGGAANA) is a signal peptide.

Belongs to the TolB family. As to quaternary structure, the Tol-Pal system is composed of five core proteins: the inner membrane proteins TolA, TolQ and TolR, the periplasmic protein TolB and the outer membrane protein Pal. They form a network linking the inner and outer membranes and the peptidoglycan layer.

It is found in the periplasm. Part of the Tol-Pal system, which plays a role in outer membrane invagination during cell division and is important for maintaining outer membrane integrity. In Paraburkholderia xenovorans (strain LB400), this protein is Tol-Pal system protein TolB.